A 187-amino-acid polypeptide reads, in one-letter code: dCTP deaminase (187 aa).

DCTP contacts are provided by residues 110-115 (KSTYAR), 134-136 (TLE), Gln155, Tyr169, and Gln179. Glu136 acts as the Proton donor/acceptor in catalysis.

This sequence belongs to the dCTP deaminase family. In terms of assembly, homotrimer.

The enzyme catalyses dCTP + H2O + H(+) = dUTP + NH4(+). Its pathway is pyrimidine metabolism; dUMP biosynthesis; dUMP from dCTP (dUTP route): step 1/2. In terms of biological role, catalyzes the deamination of dCTP to dUTP. The chain is dCTP deaminase from Bordetella pertussis (strain Tohama I / ATCC BAA-589 / NCTC 13251).